Here is a 125-residue protein sequence, read N- to C-terminus: Small ribosomal subunit protein bS6 (125 aa).

This sequence belongs to the bacterial ribosomal protein bS6 family.

Binds together with bS18 to 16S ribosomal RNA. The sequence is that of Small ribosomal subunit protein bS6 (rpsF) from Campylobacter jejuni subsp. jejuni serotype O:2 (strain ATCC 700819 / NCTC 11168).